The chain runs to 150 residues: Aspartate 1-decarboxylase (150 aa).

Ser24 serves as the catalytic Schiff-base intermediate with substrate; via pyruvic acid. The residue at position 24 (Ser24) is a Pyruvic acid (Ser). Residue Thr56 participates in substrate binding. Tyr57 serves as the catalytic Proton donor. Position 72 to 74 (72 to 74) interacts with substrate; it reads GAA.

The protein belongs to the PanD family. Heterooctamer of four alpha and four beta subunits. It depends on pyruvate as a cofactor. Is synthesized initially as an inactive proenzyme, which is activated by self-cleavage at a specific serine bond to produce a beta-subunit with a hydroxyl group at its C-terminus and an alpha-subunit with a pyruvoyl group at its N-terminus.

It is found in the cytoplasm. The enzyme catalyses L-aspartate + H(+) = beta-alanine + CO2. The protein operates within cofactor biosynthesis; (R)-pantothenate biosynthesis; beta-alanine from L-aspartate: step 1/1. Functionally, catalyzes the pyruvoyl-dependent decarboxylation of aspartate to produce beta-alanine. This Beijerinckia indica subsp. indica (strain ATCC 9039 / DSM 1715 / NCIMB 8712) protein is Aspartate 1-decarboxylase.